The primary structure comprises 397 residues: Enoyl-[acyl-carrier-protein] reductase [NADH] (397 aa).

Residues 47–52, 73–74, 110–111, and 138–139 contribute to the NAD(+) site; these read GASTGY, LE, DA, and LA. Tyrosine 224 is a substrate binding site. Tyrosine 234 acts as the Proton donor in catalysis. NAD(+)-binding positions include lysine 243 and 272 to 274; that span reads LVT.

This sequence belongs to the TER reductase family. Monomer.

It catalyses the reaction a 2,3-saturated acyl-[ACP] + NAD(+) = a (2E)-enoyl-[ACP] + NADH + H(+). It participates in lipid metabolism; fatty acid biosynthesis. Its function is as follows. Involved in the final reduction of the elongation cycle of fatty acid synthesis (FAS II). Catalyzes the reduction of a carbon-carbon double bond in an enoyl moiety that is covalently linked to an acyl carrier protein (ACP). The chain is Enoyl-[acyl-carrier-protein] reductase [NADH] from Methylobacillus flagellatus (strain ATCC 51484 / DSM 6875 / VKM B-1610 / KT).